A 193-amino-acid chain; its full sequence is Holliday junction branch migration complex subunit RuvA (193 aa).

The interval 1-64 (MIGRIAGILL…EDAHLLYGFL (64 aa)) is domain I. The segment at 65–139 (TPQERTTFRE…GKLGADLGAL (75 aa)) is domain II. Residues 139 to 143 (LAGAA) are flexible linker. The domain III stretch occupies residues 144–193 (SQSDHATDILNALVALGYSEKEGLAAIKNVPAGTGVSEGIKLALKALSKV).

The protein belongs to the RuvA family. As to quaternary structure, homotetramer. Forms an RuvA(8)-RuvB(12)-Holliday junction (HJ) complex. HJ DNA is sandwiched between 2 RuvA tetramers; dsDNA enters through RuvA and exits via RuvB. An RuvB hexamer assembles on each DNA strand where it exits the tetramer. Each RuvB hexamer is contacted by two RuvA subunits (via domain III) on 2 adjacent RuvB subunits; this complex drives branch migration. In the full resolvosome a probable DNA-RuvA(4)-RuvB(12)-RuvC(2) complex forms which resolves the HJ.

The protein localises to the cytoplasm. Its function is as follows. The RuvA-RuvB-RuvC complex processes Holliday junction (HJ) DNA during genetic recombination and DNA repair, while the RuvA-RuvB complex plays an important role in the rescue of blocked DNA replication forks via replication fork reversal (RFR). RuvA specifically binds to HJ cruciform DNA, conferring on it an open structure. The RuvB hexamer acts as an ATP-dependent pump, pulling dsDNA into and through the RuvAB complex. HJ branch migration allows RuvC to scan DNA until it finds its consensus sequence, where it cleaves and resolves the cruciform DNA. This is Holliday junction branch migration complex subunit RuvA from Burkholderia ambifaria (strain MC40-6).